We begin with the raw amino-acid sequence, 282 residues long: ATP synthase gamma chain (282 aa).

This sequence belongs to the ATPase gamma chain family. As to quaternary structure, F-type ATPases have 2 components, CF(1) - the catalytic core - and CF(0) - the membrane proton channel. CF(1) has five subunits: alpha(3), beta(3), gamma(1), delta(1), epsilon(1). CF(0) has three main subunits: a, b and c.

The protein resides in the cell membrane. In terms of biological role, produces ATP from ADP in the presence of a proton gradient across the membrane. The gamma chain is believed to be important in regulating ATPase activity and the flow of protons through the CF(0) complex. The sequence is that of ATP synthase gamma chain from Clostridium acetobutylicum (strain ATCC 824 / DSM 792 / JCM 1419 / IAM 19013 / LMG 5710 / NBRC 13948 / NRRL B-527 / VKM B-1787 / 2291 / W).